The primary structure comprises 192 residues: Flagellar transcriptional regulator FlhC (192 aa).

4 residues coordinate Zn(2+): cysteine 137, cysteine 140, cysteine 157, and cysteine 160.

It belongs to the FlhC family. As to quaternary structure, heterohexamer composed of two FlhC and four FlhD subunits. Each FlhC binds a FlhD dimer, forming a heterotrimer, and a hexamer assembles by dimerization of two heterotrimers. The cofactor is Zn(2+).

The protein resides in the cytoplasm. Its function is as follows. Functions in complex with FlhD as a master transcriptional regulator that regulates transcription of several flagellar and non-flagellar operons by binding to their promoter region. Activates expression of class 2 flagellar genes, including fliA, which is a flagellum-specific sigma factor that turns on the class 3 genes. Also regulates genes whose products function in a variety of physiological pathways. The protein is Flagellar transcriptional regulator FlhC of Escherichia coli O6:H1 (strain CFT073 / ATCC 700928 / UPEC).